A 174-amino-acid polypeptide reads, in one-letter code: Protein VdlD (174 aa).

The HotDog ACOT-type domain occupies 20-132 (DRTKLLMSYL…YFTMVAVENG (113 aa)).

It belongs to the acyl coenzyme A hydrolase family.

The protein is Protein VdlD (vdlD) of Helicobacter pylori (strain J99 / ATCC 700824) (Campylobacter pylori J99).